Reading from the N-terminus, the 141-residue chain is MAPRGKRLSSTPLEILFFLNGWYYATYFLLELFIFLYKGLLLPYPTANLVLDVVMLFLYLGVEVIRLFFGTKGNLCQRKMPLGISVALTFPSTMMASYYLLLQTYVLRLEAIMNSILLFFCGSELLLEVLTLTAFSSMDRM.

The next 4 membrane-spanning stretches (helical) occupy residues 15-35 (ILFF…LFIF), 49-69 (LVLD…RLFF), 82-102 (LGIS…YLLL), and 115-135 (SILL…LTAF).

In terms of assembly, part of the tectonic-like complex (also named B9 complex). Interacts with TMEM107.

Its subcellular location is the membrane. The protein localises to the cytoplasm. It is found in the cytoskeleton. It localises to the cilium basal body. Part of the tectonic-like complex which is required for tissue-specific ciliogenesis and may regulate ciliary membrane composition. The sequence is that of Transmembrane protein 216 (TMEM216) from Bos taurus (Bovine).